The sequence spans 285 residues: 4-diphosphocytidyl-2-C-methyl-D-erythritol kinase (285 aa).

K12 is a catalytic residue. Residue 94 to 104 participates in ATP binding; that stretch reads PAQAGMGGGSS. The active site involves D136.

The protein belongs to the GHMP kinase family. IspE subfamily.

It carries out the reaction 4-CDP-2-C-methyl-D-erythritol + ATP = 4-CDP-2-C-methyl-D-erythritol 2-phosphate + ADP + H(+). Its pathway is isoprenoid biosynthesis; isopentenyl diphosphate biosynthesis via DXP pathway; isopentenyl diphosphate from 1-deoxy-D-xylulose 5-phosphate: step 3/6. In terms of biological role, catalyzes the phosphorylation of the position 2 hydroxy group of 4-diphosphocytidyl-2C-methyl-D-erythritol. The sequence is that of 4-diphosphocytidyl-2-C-methyl-D-erythritol kinase from Paracidovorax citrulli (strain AAC00-1) (Acidovorax citrulli).